Consider the following 366-residue polypeptide: tRNA/tmRNA (uracil-C(5))-methyltransferase (366 aa).

Residues Q190, Y218, N223, E239, and D299 each contribute to the S-adenosyl-L-methionine site. C324 serves as the catalytic Nucleophile. E358 serves as the catalytic Proton acceptor.

It belongs to the class I-like SAM-binding methyltransferase superfamily. RNA M5U methyltransferase family. TrmA subfamily.

It carries out the reaction uridine(54) in tRNA + S-adenosyl-L-methionine = 5-methyluridine(54) in tRNA + S-adenosyl-L-homocysteine + H(+). It catalyses the reaction uridine(341) in tmRNA + S-adenosyl-L-methionine = 5-methyluridine(341) in tmRNA + S-adenosyl-L-homocysteine + H(+). Its function is as follows. Dual-specificity methyltransferase that catalyzes the formation of 5-methyluridine at position 54 (m5U54) in all tRNAs, and that of position 341 (m5U341) in tmRNA (transfer-mRNA). In Salmonella agona (strain SL483), this protein is tRNA/tmRNA (uracil-C(5))-methyltransferase.